Consider the following 699-residue polypeptide: Probable xyloglucan glycosyltransferase 12 (699 aa).

A run of 2 helical transmembrane segments spans residues 126–146 (CLKVFLWLSLILLGFEIAAYF) and 194–214 (IVLFLVQSLDRLILCLGCFWI). Asp-280 is an active-site residue. 2 residues coordinate substrate: Asp-339 and Asp-341. Asp-433 is an active-site residue. 2 helical membrane-spanning segments follow: residues 511 to 531 (LILPFYSFTLFCIILPMTMFV) and 536 to 556 (LPAWVVCYIPATMSFLNILPA). Residues 616-646 (EKTTKHQRGVSAPETEAEKKAEKTKRKKKKH) are disordered. Residues Lys-617 and Lys-620 each participate in a glycyl lysine isopeptide (Lys-Gly) (interchain with G-Cter in ubiquitin) cross-link. Phosphoserine is present on Ser-626. Residues 637-646 (EKTKRKKKKH) are compositionally biased toward basic residues. Helical transmembrane passes span 649-668 (IYMKELSLAFLLLTAATRSL) and 674-694 (IHFYFLLFQGISFLLVGLDLI).

Belongs to the glycosyltransferase 2 family. Plant cellulose synthase-like C subfamily. In terms of assembly, homodimer. Mainly expressed in roots, flowers and seeds, and, at very low levels, in seedlings, leaves and stems.

The protein localises to the golgi apparatus membrane. Functionally, probable beta-1,4-glucan synthase rather involved in the synthesis of the xyloglucan backbone than cellulose. Seems to work simultaneously with xyloglucan 6-xylosyltransferase. Xyloglucan is a noncellulosic polysaccharides of plant cell wall and consists of a glucan backbone substituted by xylose, galactose and fucose. The chain is Probable xyloglucan glycosyltransferase 12 from Arabidopsis thaliana (Mouse-ear cress).